The following is a 382-amino-acid chain: Protein shisa-9A (382 aa).

The N-terminal stretch at 1–26 (MKWTVLLLEYFLVKVLVLLYSADGEA) is a signal peptide. The Extracellular segment spans residues 27-132 (QQLEGFIMLS…DPRHDPTKDK (106 aa)). A glycan (N-linked (GlcNAc...) asparagine) is linked at asparagine 39. The helical transmembrane segment at 133-153 (TNLIVYIICGVVAIMALVGIF) threads the bilayer. At 154–382 (TKLGLEKAHR…VTNSKAEVTV (229 aa)) the chain is on the cytoplasmic side.

It belongs to the shisa family. SHISA9 subfamily. Component of some AMPA receptors (ionotropic glutamate receptors) complex.

The protein localises to the cell projection. It localises to the dendritic spine membrane. Its subcellular location is the synapse. In terms of biological role, regulator of short-term neuronal synaptic plasticity in the dentate gyrus. Associates with AMPA receptors (ionotropic glutamate receptors) in synaptic spines and promotes AMPA receptor desensitization at excitatory synapses. The protein is Protein shisa-9A (shisa9a) of Danio rerio (Zebrafish).